A 255-amino-acid chain; its full sequence is Type III pantothenate kinase (255 aa).

6–13 (DIGNSNIV) lines the ATP pocket. Substrate contacts are provided by residues Tyr100 and 107-110 (GSDR). The active-site Proton acceptor is Asp109. Position 129 (Asp129) interacts with K(+). Thr132 is a binding site for ATP. Thr184 contacts substrate.

The protein belongs to the type III pantothenate kinase family. In terms of assembly, homodimer. It depends on NH4(+) as a cofactor. The cofactor is K(+).

The protein localises to the cytoplasm. The catalysed reaction is (R)-pantothenate + ATP = (R)-4'-phosphopantothenate + ADP + H(+). It functions in the pathway cofactor biosynthesis; coenzyme A biosynthesis; CoA from (R)-pantothenate: step 1/5. Functionally, catalyzes the phosphorylation of pantothenate (Pan), the first step in CoA biosynthesis. The protein is Type III pantothenate kinase of Brevibacillus brevis (strain 47 / JCM 6285 / NBRC 100599).